Consider the following 159-residue polypeptide: Regulatory protein RecX (159 aa).

It belongs to the RecX family.

The protein localises to the cytoplasm. Modulates RecA activity. In Ralstonia pickettii (strain 12J), this protein is Regulatory protein RecX.